The chain runs to 142 residues: Universal stress protein C (142 aa).

Belongs to the universal stress protein A family.

The protein localises to the cytoplasm. Required for resistance to DNA-damaging agents. The polypeptide is Universal stress protein C (uspC) (Escherichia coli O157:H7).